The following is a 335-amino-acid chain: Phosphate acyltransferase (335 aa).

Belongs to the PlsX family. Homodimer. Probably interacts with PlsY.

It is found in the cytoplasm. It carries out the reaction a fatty acyl-[ACP] + phosphate = an acyl phosphate + holo-[ACP]. It participates in lipid metabolism; phospholipid metabolism. Catalyzes the reversible formation of acyl-phosphate (acyl-PO(4)) from acyl-[acyl-carrier-protein] (acyl-ACP). This enzyme utilizes acyl-ACP as fatty acyl donor, but not acyl-CoA. This Desulforudis audaxviator (strain MP104C) protein is Phosphate acyltransferase.